A 298-amino-acid chain; its full sequence is Lipoyl synthase 1 (298 aa).

[4Fe-4S] cluster-binding residues include C34, C39, C45, C60, C64, C67, and S274. Residues 46 to 263 (FKAGTATFLI…RRAGEGMGFL (218 aa)) enclose the Radical SAM core domain. A disordered region spans residues 277 to 298 (AEQVQRLMRSHPRTPKNQHSPE).

Belongs to the radical SAM superfamily. Lipoyl synthase family. [4Fe-4S] cluster serves as cofactor.

The protein resides in the cytoplasm. The enzyme catalyses [[Fe-S] cluster scaffold protein carrying a second [4Fe-4S](2+) cluster] + N(6)-octanoyl-L-lysyl-[protein] + 2 oxidized [2Fe-2S]-[ferredoxin] + 2 S-adenosyl-L-methionine + 4 H(+) = [[Fe-S] cluster scaffold protein] + N(6)-[(R)-dihydrolipoyl]-L-lysyl-[protein] + 4 Fe(3+) + 2 hydrogen sulfide + 2 5'-deoxyadenosine + 2 L-methionine + 2 reduced [2Fe-2S]-[ferredoxin]. It participates in protein modification; protein lipoylation via endogenous pathway; protein N(6)-(lipoyl)lysine from octanoyl-[acyl-carrier-protein]: step 2/2. Its function is as follows. Catalyzes the radical-mediated insertion of two sulfur atoms into the C-6 and C-8 positions of the octanoyl moiety bound to the lipoyl domains of lipoate-dependent enzymes, thereby converting the octanoylated domains into lipoylated derivatives. The sequence is that of Lipoyl synthase 1 from Gloeobacter violaceus (strain ATCC 29082 / PCC 7421).